A 339-amino-acid chain; its full sequence is Phosphate acyltransferase (339 aa).

It belongs to the PlsX family. In terms of assembly, homodimer. Probably interacts with PlsY.

The protein localises to the cytoplasm. It catalyses the reaction a fatty acyl-[ACP] + phosphate = an acyl phosphate + holo-[ACP]. It participates in lipid metabolism; phospholipid metabolism. Its function is as follows. Catalyzes the reversible formation of acyl-phosphate (acyl-PO(4)) from acyl-[acyl-carrier-protein] (acyl-ACP). This enzyme utilizes acyl-ACP as fatty acyl donor, but not acyl-CoA. The chain is Phosphate acyltransferase from Acetivibrio thermocellus (strain ATCC 27405 / DSM 1237 / JCM 9322 / NBRC 103400 / NCIMB 10682 / NRRL B-4536 / VPI 7372) (Clostridium thermocellum).